A 498-amino-acid polypeptide reads, in one-letter code: ATP synthase subunit beta, chloroplastic (498 aa).

172-179 (GGAGVGKT) contributes to the ATP binding site.

This sequence belongs to the ATPase alpha/beta chains family. F-type ATPases have 2 components, CF(1) - the catalytic core - and CF(0) - the membrane proton channel. CF(1) has five subunits: alpha(3), beta(3), gamma(1), delta(1), epsilon(1). CF(0) has four main subunits: a(1), b(1), b'(1) and c(9-12).

It is found in the plastid. It localises to the chloroplast thylakoid membrane. The catalysed reaction is ATP + H2O + 4 H(+)(in) = ADP + phosphate + 5 H(+)(out). Functionally, produces ATP from ADP in the presence of a proton gradient across the membrane. The catalytic sites are hosted primarily by the beta subunits. The polypeptide is ATP synthase subunit beta, chloroplastic (Spinacia oleracea (Spinach)).